The sequence spans 101 residues: Small ribosomal subunit protein uS14 (101 aa).

The disordered stretch occupies residues 1–23 (MAKKSSVEKNKRRRKMVAQQAPK).

The protein belongs to the universal ribosomal protein uS14 family. In terms of assembly, part of the 30S ribosomal subunit. Contacts proteins S3 and S10.

Its function is as follows. Binds 16S rRNA, required for the assembly of 30S particles and may also be responsible for determining the conformation of the 16S rRNA at the A site. The sequence is that of Small ribosomal subunit protein uS14 from Rhodospirillum centenum (strain ATCC 51521 / SW).